Consider the following 226-residue polypeptide: Biosynthetic peptidoglycan transglycosylase (226 aa).

The helical transmembrane segment at 7-29 threads the bilayer; the sequence is VMALSAIGLLLLPYLLTPLYRIG.

Belongs to the glycosyltransferase 51 family.

Its subcellular location is the cell inner membrane. It catalyses the reaction [GlcNAc-(1-&gt;4)-Mur2Ac(oyl-L-Ala-gamma-D-Glu-L-Lys-D-Ala-D-Ala)](n)-di-trans,octa-cis-undecaprenyl diphosphate + beta-D-GlcNAc-(1-&gt;4)-Mur2Ac(oyl-L-Ala-gamma-D-Glu-L-Lys-D-Ala-D-Ala)-di-trans,octa-cis-undecaprenyl diphosphate = [GlcNAc-(1-&gt;4)-Mur2Ac(oyl-L-Ala-gamma-D-Glu-L-Lys-D-Ala-D-Ala)](n+1)-di-trans,octa-cis-undecaprenyl diphosphate + di-trans,octa-cis-undecaprenyl diphosphate + H(+). Its pathway is cell wall biogenesis; peptidoglycan biosynthesis. In terms of biological role, peptidoglycan polymerase that catalyzes glycan chain elongation from lipid-linked precursors. In Nitrobacter winogradskyi (strain ATCC 25391 / DSM 10237 / CIP 104748 / NCIMB 11846 / Nb-255), this protein is Biosynthetic peptidoglycan transglycosylase.